The following is an 82-amino-acid chain: ATP synthase subunit 9, mitochondrial (82 aa).

2 helical membrane-spanning segments follow: residues 8-28 and 45-67; these read IGAG…GNVF and SFGY…PMMA.

This sequence belongs to the ATPase C chain family. As to quaternary structure, F-type ATPases have 2 components, CF(1) - the catalytic core - and CF(0) - the membrane proton channel. CF(1) has five subunits: alpha(3), beta(3), gamma(1), delta(1), epsilon(1). CF(0) has three main subunits: a, b and c.

It localises to the mitochondrion membrane. Its function is as follows. This protein is one of the chains of the nonenzymatic membrane component (F0) of mitochondrial ATPase. In Malus domestica (Apple), this protein is ATP synthase subunit 9, mitochondrial (ATP9).